Reading from the N-terminus, the 444-residue chain is UDP-N-acetylmuramate--L-alanine ligase (444 aa).

Residue 110-116 (GAHGKTS) coordinates ATP.

Belongs to the MurCDEF family.

The protein localises to the cytoplasm. The enzyme catalyses UDP-N-acetyl-alpha-D-muramate + L-alanine + ATP = UDP-N-acetyl-alpha-D-muramoyl-L-alanine + ADP + phosphate + H(+). It functions in the pathway cell wall biogenesis; peptidoglycan biosynthesis. Its function is as follows. Cell wall formation. The chain is UDP-N-acetylmuramate--L-alanine ligase from Streptococcus pneumoniae (strain P1031).